The primary structure comprises 964 residues: Translation initiation factor IF-2 (964 aa).

The segment covering 1 to 10 (MSDKTNDDKT) has biased composition (basic and acidic residues). Residues 1 to 379 (MSDKTNDDKT…SQMQETREKI (379 aa)) are disordered. The segment covering 27–37 (EQSTVRQNFSH) has biased composition (polar residues). Positions 77-102 (APAASTPAPAQAAQPAQAAPVVRAPA) are enriched in low complexity. The segment covering 103–113 (PATPAPKPAAP) has biased composition (pro residues). Residues 114-140 (AAPVTKPHVAQQRPAQQRPGGQQAQRP) are compositionally biased toward low complexity. 2 stretches are compositionally biased toward basic and acidic residues: residues 156–227 (SEMD…EAAK) and 234–243 (ARTERRDDAR). Residues 250–278 (RPQQAGRPQGNRPPQGGRPQQGGPRPAAP) are compositionally biased toward low complexity. Residues 323–338 (PEVRAPKVVKTEDDRR) show a composition bias toward basic and acidic residues. In terms of domain architecture, tr-type G spans 462-629 (SRPPVVTIMG…AILLQAEILD (168 aa)). The tract at residues 471–478 (GHVDHGKT) is G1. 471–478 (GHVDHGKT) is a GTP binding site. The interval 496–500 (GITQH) is G2. Residues 517-520 (DTPG) form a G3 region. GTP-binding positions include 517-521 (DTPGH) and 571-574 (NKID). The tract at residues 571-574 (NKID) is G4. Positions 607–609 (SAK) are G5.

Belongs to the TRAFAC class translation factor GTPase superfamily. Classic translation factor GTPase family. IF-2 subfamily.

The protein localises to the cytoplasm. One of the essential components for the initiation of protein synthesis. Protects formylmethionyl-tRNA from spontaneous hydrolysis and promotes its binding to the 30S ribosomal subunits. Also involved in the hydrolysis of GTP during the formation of the 70S ribosomal complex. In Brucella anthropi (strain ATCC 49188 / DSM 6882 / CCUG 24695 / JCM 21032 / LMG 3331 / NBRC 15819 / NCTC 12168 / Alc 37) (Ochrobactrum anthropi), this protein is Translation initiation factor IF-2.